Here is a 709-residue protein sequence, read N- to C-terminus: Polyribonucleotide nucleotidyltransferase (709 aa).

2 residues coordinate Mg(2+): Asp487 and Asp493. Positions 554-613 constitute a KH domain; sequence PRIHTMKISVEKIKDVIGKGGAVIRQLTEETGTTIEIEDDGTIKIAATDGDQAKEAIRRI. The S1 motif domain occupies 623–691; the sequence is GVIYTGKVAR…RQGRVRLSMK (69 aa).

It belongs to the polyribonucleotide nucleotidyltransferase family. As to quaternary structure, component of the RNA degradosome, which is a multiprotein complex involved in RNA processing and mRNA degradation. Mg(2+) serves as cofactor.

It is found in the cytoplasm. It carries out the reaction RNA(n+1) + phosphate = RNA(n) + a ribonucleoside 5'-diphosphate. Its function is as follows. Involved in mRNA degradation. Catalyzes the phosphorolysis of single-stranded polyribonucleotides processively in the 3'- to 5'-direction. In Vibrio cholerae serotype O1 (strain ATCC 39315 / El Tor Inaba N16961), this protein is Polyribonucleotide nucleotidyltransferase.